We begin with the raw amino-acid sequence, 121 residues long: Ribonuclease P protein component (121 aa).

Belongs to the RnpA family. In terms of assembly, consists of a catalytic RNA component (M1 or rnpB) and a protein subunit.

The catalysed reaction is Endonucleolytic cleavage of RNA, removing 5'-extranucleotides from tRNA precursor.. In terms of biological role, RNaseP catalyzes the removal of the 5'-leader sequence from pre-tRNA to produce the mature 5'-terminus. It can also cleave other RNA substrates such as 4.5S RNA. The protein component plays an auxiliary but essential role in vivo by binding to the 5'-leader sequence and broadening the substrate specificity of the ribozyme. The protein is Ribonuclease P protein component of Coxiella burnetii (strain Dugway 5J108-111).